We begin with the raw amino-acid sequence, 248 residues long: Phycocyanobilin:ferredoxin oxidoreductase (248 aa).

It belongs to the HY2 family.

It catalyses the reaction (2R,3Z)-phycocyanobilin + 4 oxidized [2Fe-2S]-[ferredoxin] = biliverdin IXalpha + 4 reduced [2Fe-2S]-[ferredoxin] + 4 H(+). Catalyzes the four-electron reduction of biliverdin IX-alpha (2-electron reduction at both the A and D rings); the reaction proceeds via an isolatable 2-electron intermediate, 181,182-dihydrobiliverdin. This is Phycocyanobilin:ferredoxin oxidoreductase (pcyA) from Synechococcus elongatus (strain ATCC 33912 / PCC 7942 / FACHB-805) (Anacystis nidulans R2).